A 147-amino-acid chain; its full sequence is Catabolic 3-dehydroquinase 2 (147 aa).

The active-site Proton acceptor is the Tyr23. Substrate contacts are provided by Asn74, His80, and Asp87. His100 (proton donor) is an active-site residue. Substrate contacts are provided by residues 101-102 and Arg111; that span reads IT.

The protein belongs to the type-II 3-dehydroquinase family. Homododecamer. Adopts a ring-like structure, composed of an arrangement of two hexameric rings stacked on top of one another.

It catalyses the reaction 3-dehydroquinate = 3-dehydroshikimate + H2O. It functions in the pathway aromatic compound metabolism; 3,4-dihydroxybenzoate biosynthesis; 3,4-dihydroxybenzoate from 3-dehydroquinate: step 1/2. In terms of biological role, is involved in the catabolism of quinate. Allows the utilization of quinate as carbon source via the beta-ketoadipate pathway. This is Catabolic 3-dehydroquinase 2 from Aspergillus terreus (strain NIH 2624 / FGSC A1156).